Reading from the N-terminus, the 512-residue chain is GMP synthase [glutamine-hydrolyzing] (512 aa).

Residues 7 to 197 enclose the Glutamine amidotransferase type-1 domain; the sequence is TIIVLDFGSQ…VFGVCGCSEG (191 aa). Catalysis depends on Cys84, which acts as the Nucleophile. Catalysis depends on residues His171 and Glu173. The region spanning 198–387 is the GMPS ATP-PPase domain; sequence WNMENFIEVE…LGIPDEIVWR (190 aa). 225–231 serves as a coordination point for ATP; that stretch reads SGGVDSS.

As to quaternary structure, homodimer.

It catalyses the reaction XMP + L-glutamine + ATP + H2O = GMP + L-glutamate + AMP + diphosphate + 2 H(+). It functions in the pathway purine metabolism; GMP biosynthesis; GMP from XMP (L-Gln route): step 1/1. Functionally, catalyzes the synthesis of GMP from XMP. In Bacillus mycoides (strain KBAB4) (Bacillus weihenstephanensis), this protein is GMP synthase [glutamine-hydrolyzing].